A 372-amino-acid chain; its full sequence is Spermidine/putrescine import ATP-binding protein PotA (372 aa).

In terms of domain architecture, ABC transporter spans 13–243 (IKLTGISKSF…PKNLFVARFI (231 aa)). 45–52 (GPSGCGKT) contacts ATP.

This sequence belongs to the ABC transporter superfamily. Spermidine/putrescine importer (TC 3.A.1.11.1) family. As to quaternary structure, the complex is composed of two ATP-binding proteins (PotA), two transmembrane proteins (PotB and PotC) and a solute-binding protein (PotD).

It is found in the cell inner membrane. The enzyme catalyses ATP + H2O + polyamine-[polyamine-binding protein]Side 1 = ADP + phosphate + polyamineSide 2 + [polyamine-binding protein]Side 1.. Its function is as follows. Part of the ABC transporter complex PotABCD involved in spermidine/putrescine import. Responsible for energy coupling to the transport system. The polypeptide is Spermidine/putrescine import ATP-binding protein PotA (Aliivibrio fischeri (strain ATCC 700601 / ES114) (Vibrio fischeri)).